A 495-amino-acid polypeptide reads, in one-letter code: Aspartyl/glutamyl-tRNA(Asn/Gln) amidotransferase subunit B (495 aa).

Belongs to the GatB/GatE family. GatB subfamily. Heterotrimer of A, B and C subunits.

It carries out the reaction L-glutamyl-tRNA(Gln) + L-glutamine + ATP + H2O = L-glutaminyl-tRNA(Gln) + L-glutamate + ADP + phosphate + H(+). The catalysed reaction is L-aspartyl-tRNA(Asn) + L-glutamine + ATP + H2O = L-asparaginyl-tRNA(Asn) + L-glutamate + ADP + phosphate + 2 H(+). Functionally, allows the formation of correctly charged Asn-tRNA(Asn) or Gln-tRNA(Gln) through the transamidation of misacylated Asp-tRNA(Asn) or Glu-tRNA(Gln) in organisms which lack either or both of asparaginyl-tRNA or glutaminyl-tRNA synthetases. The reaction takes place in the presence of glutamine and ATP through an activated phospho-Asp-tRNA(Asn) or phospho-Glu-tRNA(Gln). The protein is Aspartyl/glutamyl-tRNA(Asn/Gln) amidotransferase subunit B of Beijerinckia indica subsp. indica (strain ATCC 9039 / DSM 1715 / NCIMB 8712).